The chain runs to 382 residues: N-acetyldiaminopimelate deacetylase (382 aa).

Residue Asp73 is part of the active site. Glu132 (proton acceptor) is an active-site residue.

The protein belongs to the peptidase M20A family. N-acetyldiaminopimelate deacetylase subfamily.

The enzyme catalyses N-acetyl-(2S,6S)-2,6-diaminopimelate + H2O = (2S,6S)-2,6-diaminopimelate + acetate. The protein operates within amino-acid biosynthesis; L-lysine biosynthesis via DAP pathway; LL-2,6-diaminopimelate from (S)-tetrahydrodipicolinate (acetylase route): step 3/3. Catalyzes the conversion of N-acetyl-diaminopimelate to diaminopimelate and acetate. The protein is N-acetyldiaminopimelate deacetylase of Oenococcus oeni (strain ATCC BAA-331 / PSU-1).